A 249-amino-acid chain; its full sequence is Triosephosphate isomerase (249 aa).

Residue 9–11 (NWK) participates in substrate binding. Residue His95 is the Electrophile of the active site. The active-site Proton acceptor is the Glu167. Substrate contacts are provided by residues Gly173, Ser213, and 234 to 235 (GG).

This sequence belongs to the triosephosphate isomerase family. As to quaternary structure, homodimer.

Its subcellular location is the cytoplasm. It catalyses the reaction D-glyceraldehyde 3-phosphate = dihydroxyacetone phosphate. It functions in the pathway carbohydrate biosynthesis; gluconeogenesis. It participates in carbohydrate degradation; glycolysis; D-glyceraldehyde 3-phosphate from glycerone phosphate: step 1/1. Involved in the gluconeogenesis. Catalyzes stereospecifically the conversion of dihydroxyacetone phosphate (DHAP) to D-glyceraldehyde-3-phosphate (G3P). The protein is Triosephosphate isomerase of Solibacter usitatus (strain Ellin6076).